We begin with the raw amino-acid sequence, 58 residues long: SPbeta prophage-derived uncharacterized protein YonT (58 aa).

Residues 6 to 26 (GIVVAFLISLTVLTINSLTIV) traverse the membrane as a helical segment. The segment at 35 to 58 (GTSKKKKRIRKRLRPKRQRQRIRR) is disordered. Basic residues predominate over residues 36–58 (TSKKKKRIRKRLRPKRQRQRIRR).

Its subcellular location is the cell membrane. The protein is SPbeta prophage-derived uncharacterized protein YonT (yonT) of Bacillus subtilis (strain 168).